A 591-amino-acid polypeptide reads, in one-letter code: Aspartate--tRNA ligase (591 aa).

Position 176 (glutamate 176) interacts with L-aspartate. Residues 200 to 203 are aspartate; it reads QILK. Arginine 222 is an L-aspartate binding site. Residues 222-224 and glutamine 231 each bind ATP; that span reads RDE. Residue histidine 450 coordinates L-aspartate. Residue glutamate 484 participates in ATP binding. Position 491 (arginine 491) interacts with L-aspartate. Residue 536 to 539 participates in ATP binding; the sequence is GLDR.

The protein belongs to the class-II aminoacyl-tRNA synthetase family. Type 1 subfamily. Homodimer.

It is found in the cytoplasm. The enzyme catalyses tRNA(Asp) + L-aspartate + ATP = L-aspartyl-tRNA(Asp) + AMP + diphosphate. Catalyzes the attachment of L-aspartate to tRNA(Asp) in a two-step reaction: L-aspartate is first activated by ATP to form Asp-AMP and then transferred to the acceptor end of tRNA(Asp). This is Aspartate--tRNA ligase from Listeria monocytogenes serotype 4a (strain HCC23).